We begin with the raw amino-acid sequence, 464 residues long: ATP synthase subunit beta 2 (464 aa).

153 to 160 (GGAGVGKT) contacts ATP.

This sequence belongs to the ATPase alpha/beta chains family. In terms of assembly, F-type ATPases have 2 components, CF(1) - the catalytic core - and CF(0) - the membrane proton channel. CF(1) has five subunits: alpha(3), beta(3), gamma(1), delta(1), epsilon(1). CF(0) has three main subunits: a(1), b(2) and c(9-12). The alpha and beta chains form an alternating ring which encloses part of the gamma chain. CF(1) is attached to CF(0) by a central stalk formed by the gamma and epsilon chains, while a peripheral stalk is formed by the delta and b chains.

Its subcellular location is the cell inner membrane. The catalysed reaction is ATP + H2O + 4 H(+)(in) = ADP + phosphate + 5 H(+)(out). Its function is as follows. Produces ATP from ADP in the presence of a proton gradient across the membrane. The catalytic sites are hosted primarily by the beta subunits. The protein is ATP synthase subunit beta 2 of Paraburkholderia xenovorans (strain LB400).